The chain runs to 164 residues: Peptide deformylase-like (164 aa).

Glu-133 is an active-site residue.

This sequence belongs to the polypeptide deformylase family.

This chain is Peptide deformylase-like, found in Agrobacterium fabrum (strain C58 / ATCC 33970) (Agrobacterium tumefaciens (strain C58)).